A 258-amino-acid chain; its full sequence is Phosphoadenosine 5'-phosphosulfate reductase (258 aa).

Cys244 functions as the Nucleophile; cysteine thiosulfonate intermediate in the catalytic mechanism.

Belongs to the PAPS reductase family. CysH subfamily.

It localises to the cytoplasm. It carries out the reaction [thioredoxin]-disulfide + sulfite + adenosine 3',5'-bisphosphate + 2 H(+) = [thioredoxin]-dithiol + 3'-phosphoadenylyl sulfate. It participates in sulfur metabolism; hydrogen sulfide biosynthesis; sulfite from sulfate: step 3/3. Catalyzes the formation of sulfite from phosphoadenosine 5'-phosphosulfate (PAPS) using thioredoxin as an electron donor. This chain is Phosphoadenosine 5'-phosphosulfate reductase, found in Vibrio vulnificus (strain CMCP6).